Here is a 101-residue protein sequence, read N- to C-terminus: NAD(P)H-quinone oxidoreductase subunit 4L, chloroplastic (101 aa).

A run of 3 helical transmembrane segments spans residues M2–I22, M32–F52, and I61–V81.

The protein belongs to the complex I subunit 4L family. NDH is composed of at least 16 different subunits, 5 of which are encoded in the nucleus.

It is found in the plastid. It localises to the chloroplast thylakoid membrane. It catalyses the reaction a plastoquinone + NADH + (n+1) H(+)(in) = a plastoquinol + NAD(+) + n H(+)(out). The enzyme catalyses a plastoquinone + NADPH + (n+1) H(+)(in) = a plastoquinol + NADP(+) + n H(+)(out). Functionally, NDH shuttles electrons from NAD(P)H:plastoquinone, via FMN and iron-sulfur (Fe-S) centers, to quinones in the photosynthetic chain and possibly in a chloroplast respiratory chain. The immediate electron acceptor for the enzyme in this species is believed to be plastoquinone. Couples the redox reaction to proton translocation, and thus conserves the redox energy in a proton gradient. The sequence is that of NAD(P)H-quinone oxidoreductase subunit 4L, chloroplastic from Jasminum nudiflorum (Winter jasmine).